The sequence spans 52 residues: ERMES regulator 1 (52 aa).

Residues 1 to 27 (MIFFFNQIRSIFTALHTPTQQIQLSRR) lie on the Mitochondrial intermembrane side of the membrane. Residues 28-46 (AFFQFLGYLGSCVVISLAA) traverse the membrane as a helical segment. Topologically, residues 47–52 (QSKYVQ) are cytoplasmic.

It belongs to the EMR1 family.

The protein localises to the mitochondrion outer membrane. Its function is as follows. Mediates the formation of endoplasmic reticulum (ER)-mitochondria encounter structure (ERMES) foci, thereby contributing to the formation of ER-mitochondrial contact sites. The sequence is that of ERMES regulator 1 from Saccharomyces cerevisiae (strain ATCC 204508 / S288c) (Baker's yeast).